Reading from the N-terminus, the 393-residue chain is S-adenosylmethionine synthase 1 (393 aa).

Glu9 provides a ligand contact to Mg(2+). Residue His15 coordinates ATP. Residue Glu43 participates in K(+) binding. Residues Glu56 and Gln99 each contribute to the L-methionine site. ATP contacts are provided by residues 167 to 169, 235 to 238, Asp246, 252 to 253, Ala269, Lys273, and Lys277; these read DGK, SGRF, and RK. Asp246 contributes to the L-methionine binding site. Lys277 is an L-methionine binding site.

It belongs to the AdoMet synthase family. As to quaternary structure, homotetramer. Requires Mn(2+) as cofactor. Mg(2+) is required as a cofactor. It depends on Co(2+) as a cofactor. K(+) serves as cofactor. The cofactor is NH4(+). As to expression, mostly expressed in roots, and, to a lower extent, in hypocotyls and cotyledons.

It is found in the cytoplasm. The enzyme catalyses L-methionine + ATP + H2O = S-adenosyl-L-methionine + phosphate + diphosphate. It functions in the pathway amino-acid biosynthesis; S-adenosyl-L-methionine biosynthesis; S-adenosyl-L-methionine from L-methionine: step 1/1. Inhibited by products of SAMS reaction (SAM, Pi, PPi), substrate analogs (cycloleucine and ethionine), and alternative nucleotides (GTP, CTP and ADP). Strongly repressed by PPPi. Catalyzes the formation of S-adenosylmethionine from methionine and ATP. The reaction comprises two steps that are both catalyzed by the same enzyme: formation of S-adenosylmethionine (AdoMet) and triphosphate, and subsequent hydrolysis of the triphosphate. The polypeptide is S-adenosylmethionine synthase 1 (SAMS1) (Catharanthus roseus (Madagascar periwinkle)).